The primary structure comprises 230 residues: MAKNKRLAKAQSAVDRAKLYPVVEAMALVKSNATAKFDETVELSLNLGIDPRHADQMVRGLISLPNGTGKTLRVGVFARGPKAEEAKAAGADVVGAEDLAELVQNGTIEFDRCIATPDMMALVGRLGKILGPRGLMPNPKLGTVTMDVKGAITAAKSGQVEFRAEKAGIIHAGIGKASFEAEKLIENAKALVDAIQKAKPTGAKGTYLQKAALSSTMGPGVRVDVSSLTA.

Belongs to the universal ribosomal protein uL1 family. As to quaternary structure, part of the 50S ribosomal subunit.

Functionally, binds directly to 23S rRNA. The L1 stalk is quite mobile in the ribosome, and is involved in E site tRNA release. Its function is as follows. Protein L1 is also a translational repressor protein, it controls the translation of the L11 operon by binding to its mRNA. The protein is Large ribosomal subunit protein uL1 of Acidiphilium cryptum (strain JF-5).